The chain runs to 184 residues: Photosystem I assembly protein Ycf4 (184 aa).

A run of 2 helical transmembrane segments spans residues 19-39 and 57-77; these read ISNF…LLVG and IVFF…LFIS.

Belongs to the Ycf4 family.

It localises to the plastid. The protein localises to the chloroplast thylakoid membrane. Seems to be required for the assembly of the photosystem I complex. The sequence is that of Photosystem I assembly protein Ycf4 from Nicotiana tomentosiformis (Tobacco).